A 1106-amino-acid chain; its full sequence is Carbamoyl phosphate synthase large chain (1106 aa).

The tract at residues 1–401 is carboxyphosphate synthetic domain; sequence MPKRNDLNKV…AFLKALRSLE (401 aa). The ATP site is built by arginine 129, arginine 169, glycine 175, glycine 176, arginine 208, valine 210, glutamate 215, glycine 241, valine 242, histidine 243, glutamine 284, and glutamate 298. The 195-residue stretch at 133 to 327 folds into the ATP-grasp 1 domain; that stretch reads KTTMNDIGEP…IARVASKIAI (195 aa). Mg(2+) contacts are provided by glutamine 284, glutamate 298, and asparagine 300. Residues glutamine 284, glutamate 298, and asparagine 300 each contribute to the Mn(2+) site. The tract at residues 402-577 is oligomerization domain; that stretch reads IDLDDLHQSI…YSAYNEENEA (176 aa). The segment at 578 to 964 is carbamoyl phosphate synthetic domain; that stretch reads IPPSEPTHDK…ALYKAMLASG (387 aa). Positions 706–896 constitute an ATP-grasp 2 domain; that stretch reads DQLLNKLGID…MVKIATKAMM (191 aa). ATP-binding residues include arginine 742, glutamine 781, leucine 783, glutamate 787, glycine 812, valine 813, histidine 814, serine 815, glutamine 855, and glutamate 867. Mg(2+)-binding residues include glutamine 855, glutamate 867, and asparagine 869. The Mn(2+) site is built by glutamine 855, glutamate 867, and asparagine 869. An MGS-like domain is found at 965–1106; the sequence is FSINLNGGVL…LQDYLKELSN (142 aa). The interval 965–1106 is allosteric domain; sequence FSINLNGGVL…LQDYLKELSN (142 aa).

Belongs to the CarB family. In terms of assembly, composed of two chains; the small (or glutamine) chain promotes the hydrolysis of glutamine to ammonia, which is used by the large (or ammonia) chain to synthesize carbamoyl phosphate. Tetramer of heterodimers (alpha,beta)4. The cofactor is Mg(2+). It depends on Mn(2+) as a cofactor.

The enzyme catalyses hydrogencarbonate + L-glutamine + 2 ATP + H2O = carbamoyl phosphate + L-glutamate + 2 ADP + phosphate + 2 H(+). It catalyses the reaction hydrogencarbonate + NH4(+) + 2 ATP = carbamoyl phosphate + 2 ADP + phosphate + 2 H(+). It participates in amino-acid biosynthesis; L-arginine biosynthesis; carbamoyl phosphate from bicarbonate: step 1/1. Its pathway is pyrimidine metabolism; UMP biosynthesis via de novo pathway; (S)-dihydroorotate from bicarbonate: step 1/3. Its function is as follows. Large subunit of the glutamine-dependent carbamoyl phosphate synthetase (CPSase). CPSase catalyzes the formation of carbamoyl phosphate from the ammonia moiety of glutamine, carbonate, and phosphate donated by ATP, constituting the first step of 2 biosynthetic pathways, one leading to arginine and/or urea and the other to pyrimidine nucleotides. The large subunit (synthetase) binds the substrates ammonia (free or transferred from glutamine from the small subunit), hydrogencarbonate and ATP and carries out an ATP-coupled ligase reaction, activating hydrogencarbonate by forming carboxy phosphate which reacts with ammonia to form carbamoyl phosphate. This Natranaerobius thermophilus (strain ATCC BAA-1301 / DSM 18059 / JW/NM-WN-LF) protein is Carbamoyl phosphate synthase large chain.